The primary structure comprises 122 residues: Large ribosomal subunit protein uL14 (122 aa).

The protein belongs to the universal ribosomal protein uL14 family. Part of the 50S ribosomal subunit. Forms a cluster with proteins L3 and L19. In the 70S ribosome, L14 and L19 interact and together make contacts with the 16S rRNA in bridges B5 and B8.

Binds to 23S rRNA. Forms part of two intersubunit bridges in the 70S ribosome. This chain is Large ribosomal subunit protein uL14, found in Maridesulfovibrio salexigens (strain ATCC 14822 / DSM 2638 / NCIMB 8403 / VKM B-1763) (Desulfovibrio salexigens).